Here is a 323-residue protein sequence, read N- to C-terminus: Melanocortin receptor 3 (323 aa).

The Extracellular segment spans residues 1 to 37; that stretch reads MNSSCCPSSSYPTLPNLSQHPAAPSASNRSGSGFCEQ. Asparagine 2, asparagine 16, and asparagine 28 each carry an N-linked (GlcNAc...) asparagine glycan. The helical transmembrane segment at 38 to 63 threads the bilayer; it reads VFIKPEVFLALGIVSLMENILVILAV. Residues 64-75 lie on the Cytoplasmic side of the membrane; the sequence is VRNGNLHSPMYF. Residues 76–100 form a helical membrane-spanning segment; the sequence is FLCSLAAADMLVSLSNSLETIMIVV. The Extracellular segment spans residues 101–118; sequence INSDSLTLEDQFIQHMDN. The helical transmembrane segment at 119–140 threads the bilayer; that stretch reads IFDSMICISLVASICNLLAIAV. Residues 141-160 are Cytoplasmic-facing; that stretch reads DRYVTIFYALRYHSIMTVRK. The helical transmembrane segment at 161 to 181 threads the bilayer; sequence ALSLIVAIWVCCGICGVMFIV. At 182-186 the chain is on the extracellular side; it reads YSESK. The chain crosses the membrane as a helical span at residues 187–210; sequence MVIVCLITMFFAMVLLMGTLYIHM. Residues 211–245 are Cytoplasmic-facing; the sequence is FLFARLHVQRIAALPPADGVAPQQHSCMKGAVTIT. Residues 246 to 268 traverse the membrane as a helical segment; that stretch reads ILLGVFIFCWAPFFLHLVLIITC. Residues 269 to 277 are Extracellular-facing; it reads PTNPYCICY. A helical transmembrane segment spans residues 278–301; it reads TAHFNTYLVLIMCNSVIDPLIYAF. The Cytoplasmic portion of the chain corresponds to 302-323; that stretch reads RSLELRNTFKEILCGCNGMNVG. Cysteine 315 carries the S-palmitoyl cysteine lipid modification.

The protein belongs to the G-protein coupled receptor 1 family. Brain.

The protein localises to the cell membrane. Its function is as follows. Receptor for MSH (alpha, beta and gamma) and ACTH. This receptor is mediated by G proteins which activate adenylate cyclase. Required for expression of anticipatory patterns of activity and wakefulness during periods of limited nutrient availability and for the normal regulation of circadian clock activity in the brain. This is Melanocortin receptor 3 (Mc3r) from Rattus norvegicus (Rat).